A 133-amino-acid polypeptide reads, in one-letter code: Small ribosomal subunit protein uS8 (133 aa).

Residues 1–30 (MANHDPISDMLTRIRNASEKRHETTKVPAS) form a disordered region. Basic and acidic residues predominate over residues 16 to 25 (NASEKRHETT).

Belongs to the universal ribosomal protein uS8 family. In terms of assembly, part of the 30S ribosomal subunit. Contacts proteins S5 and S12.

Its function is as follows. One of the primary rRNA binding proteins, it binds directly to 16S rRNA central domain where it helps coordinate assembly of the platform of the 30S subunit. This chain is Small ribosomal subunit protein uS8, found in Synechococcus sp. (strain CC9902).